The primary structure comprises 434 residues: Methylenetetrahydrofolate--tRNA-(uracil-5-)-methyltransferase TrmFO (434 aa).

FAD is bound at residue 10 to 15; it reads GAGLAG.

The protein belongs to the MnmG family. TrmFO subfamily. FAD serves as cofactor.

It is found in the cytoplasm. It carries out the reaction uridine(54) in tRNA + (6R)-5,10-methylene-5,6,7,8-tetrahydrofolate + NADH + H(+) = 5-methyluridine(54) in tRNA + (6S)-5,6,7,8-tetrahydrofolate + NAD(+). The catalysed reaction is uridine(54) in tRNA + (6R)-5,10-methylene-5,6,7,8-tetrahydrofolate + NADPH + H(+) = 5-methyluridine(54) in tRNA + (6S)-5,6,7,8-tetrahydrofolate + NADP(+). Catalyzes the folate-dependent formation of 5-methyl-uridine at position 54 (M-5-U54) in all tRNAs. The sequence is that of Methylenetetrahydrofolate--tRNA-(uracil-5-)-methyltransferase TrmFO from Bacillus anthracis (strain A0248).